We begin with the raw amino-acid sequence, 780 residues long: Ribonucleoside-diphosphate reductase large subunit (780 aa).

Substrate-binding positions include Thr-177, 192–193, Gly-223, 393–397, and 595–599; these read SC, NLCAE, and PTVGS. Cys-193 and Cys-409 are oxidised to a cystine. The active-site Proton acceptor is the Asn-393. Cys-395 serves as the catalytic Cysteine radical intermediate. Residue Glu-397 is the Proton acceptor of the active site.

It belongs to the ribonucleoside diphosphate reductase large chain family. In terms of assembly, heterotetramer composed of a homodimer of the large subunit (R1) and a homodimer of the small subunit (R2). Larger multisubunit protein complex are also active, composed of (R1)n(R2)n.

The catalysed reaction is a 2'-deoxyribonucleoside 5'-diphosphate + [thioredoxin]-disulfide + H2O = a ribonucleoside 5'-diphosphate + [thioredoxin]-dithiol. Its function is as follows. Ribonucleoside-diphosphate reductase holoenzyme provides the precursors necessary for viral DNA synthesis. Allows virus growth in non-dividing cells, as well as reactivation from latency in infected hosts. Catalyzes the biosynthesis of deoxyribonucleotides from the corresponding ribonucleotides. The protein is Ribonucleoside-diphosphate reductase large subunit of Connochaetes taurinus (Blue wildebeest).